The following is a 485-amino-acid chain: Beta-amyrin 28-monooxygenase CYP716A378 (485 aa).

A helical; Signal-anchor for type II membrane protein transmembrane segment spans residues 3–23 (LFFICGLVLFSTLSLISLFLL). Asparagine 25 and asparagine 386 each carry an N-linked (GlcNAc...) asparagine glycan. Cysteine 426 is a heme binding site.

It belongs to the cytochrome P450 family. Heme serves as cofactor. As to expression, mainly expressed in flowers and flower buds, to a lesser extent in young leaves and, at low levels, in old leaves, stems and roots.

It localises to the membrane. The catalysed reaction is beta-amyrin + 3 reduced [NADPH--hemoprotein reductase] + 3 O2 = oleanolate + 3 oxidized [NADPH--hemoprotein reductase] + 4 H2O + 4 H(+). Its pathway is secondary metabolite biosynthesis; terpenoid biosynthesis. In terms of biological role, component of the oleanane-type triterpene saponins (e.g. saponarioside A and saponarioside B) biosynthetic pathway, leading to the production of natural products with detergent properties used as traditional sources of soap. An oxidoreductase that facilitates the oxidation of the methyl group to a carboxyl group at the C-28 position of beta-amyrin, resulting in the formation of oleanolate. The protein is Beta-amyrin 28-monooxygenase CYP716A378 of Saponaria officinalis (Common soapwort).